Here is a 1273-residue protein sequence, read N- to C-terminus: DNA-directed RNA polymerase subunit beta (1273 aa).

Belongs to the RNA polymerase beta chain family. In terms of assembly, the RNAP catalytic core consists of 2 alpha, 1 beta, 1 beta' and 1 omega subunit. When a sigma factor is associated with the core the holoenzyme is formed, which can initiate transcription.

The enzyme catalyses RNA(n) + a ribonucleoside 5'-triphosphate = RNA(n+1) + diphosphate. Its function is as follows. DNA-dependent RNA polymerase catalyzes the transcription of DNA into RNA using the four ribonucleoside triphosphates as substrates. The sequence is that of DNA-directed RNA polymerase subunit beta from Onion yellows phytoplasma (strain OY-M).